The following is a 241-amino-acid chain: Geranylgeranylglyceryl phosphate synthase (241 aa).

Mg(2+)-binding residues include Asp-19 and Ser-46. Residues Tyr-167 to Gly-173, Gly-198 to Gly-199, and Gly-220 to Thr-221 contribute to the sn-glycerol 1-phosphate site.

This sequence belongs to the GGGP/HepGP synthase family. Group II subfamily. The cofactor is Mg(2+).

It localises to the cytoplasm. It carries out the reaction sn-glycerol 1-phosphate + (2E,6E,10E)-geranylgeranyl diphosphate = sn-3-O-(geranylgeranyl)glycerol 1-phosphate + diphosphate. It functions in the pathway membrane lipid metabolism; glycerophospholipid metabolism. Functionally, prenyltransferase that catalyzes the transfer of the geranylgeranyl moiety of geranylgeranyl diphosphate (GGPP) to the C3 hydroxyl of sn-glycerol-1-phosphate (G1P). This reaction is the first ether-bond-formation step in the biosynthesis of archaeal membrane lipids. The polypeptide is Geranylgeranylglyceryl phosphate synthase (Pyrobaculum calidifontis (strain DSM 21063 / JCM 11548 / VA1)).